The chain runs to 1475 residues: Mediator of RNA polymerase II transcription subunit 1.1 (1475 aa).

Disordered regions lie at residues Ser-579–Met-600, Gly-645–Glu-894, and Pro-908–Glu-1475. The span at Pro-655–Pro-666 shows a compositional bias: low complexity. The segment covering Gln-755–Pro-766 has biased composition (polar residues). Low complexity predominate over residues His-767–Ser-800. A compositionally biased stretch (acidic residues) spans Thr-810–Asp-819. Over residues Ser-829–Pro-838 the composition is skewed to low complexity. Over residues Thr-869–Phe-880 the composition is skewed to pro residues. Residues Gln-915–Ser-929 are compositionally biased toward low complexity. A compositionally biased stretch (pro residues) spans Pro-941–Pro-952. Low complexity-rich tracts occupy residues Gln-969 to Ala-989 and Gln-1037 to Ser-1049. Basic and acidic residues-rich tracts occupy residues Pro-1052–Ile-1070, Val-1080–Pro-1148, and Glu-1155–Ser-1180. Residues Asp-1098–Asp-1135 are a coiled coil. A compositionally biased stretch (polar residues) spans Lys-1181–Leu-1193. The span at Pro-1199 to Ala-1215 shows a compositional bias: basic and acidic residues. Low complexity predominate over residues Ala-1242–Gln-1252. Positions Pro-1281 to Thr-1291 are enriched in pro residues. Polar residues predominate over residues Pro-1308 to Arg-1317. Pro residues-rich tracts occupy residues Pro-1320–Asp-1334 and Pro-1425–Pro-1440.

Belongs to the Mediator complex subunit 1 family. As to quaternary structure, component of the Mediator complex.

The protein localises to the nucleus. Component of the Mediator complex, a coactivator involved in the regulated transcription of nearly all RNA polymerase II-dependent genes. Mediator functions as a bridge to convey information from gene-specific regulatory proteins to the basal RNA polymerase II transcription machinery. Mediator is recruited to promoters by direct interactions with regulatory proteins and serves as a scaffold for the assembly of a functional preinitiation complex with RNA polymerase II and the general transcription factors. This chain is Mediator of RNA polymerase II transcription subunit 1.1 (sop-3), found in Caenorhabditis elegans.